The chain runs to 295 residues: uncharacterized protein (295 aa).

Over residues 57 to 67 (RKLLVKQKRKS) the composition is skewed to basic residues. The disordered stretch occupies residues 57 to 94 (RKLLVKQKRKSNKEFQSNIIKKRKDEERKGTLKTEQAN). Basic and acidic residues predominate over residues 79-88 (RKDEERKGTL). 2 coiled-coil regions span residues 87–116 (TLKT…YDQY) and 259–286 (DVLT…LGER).

The protein resides in the nucleus. This is an uncharacterized protein from Schizosaccharomyces pombe (strain 972 / ATCC 24843) (Fission yeast).